A 533-amino-acid polypeptide reads, in one-letter code: Protein translocase subunit SecD (533 aa).

The next 6 helical transmembrane spans lie at 8–28, 377–397, 400–420, 422–442, 469–489, and 495–515; these read ALLVVVVLIVGVVYLVPTFVS, IVGGIGTILFMLIYYRFGGVV, LALALNVLLVLAGMAAFGFTL, LPGIAGIALTIGMAVDANVLI, LTILDANVTTIIAALVLLQFG, and GFAVTLTVGLAANMFTAIFVT.

This sequence belongs to the SecD/SecF family. SecD subfamily. As to quaternary structure, forms a complex with SecF. Part of the essential Sec protein translocation apparatus which comprises SecA, SecYEG and auxiliary proteins SecDF-YajC and YidC.

Its subcellular location is the cell inner membrane. Its function is as follows. Part of the Sec protein translocase complex. Interacts with the SecYEG preprotein conducting channel. SecDF uses the proton motive force (PMF) to complete protein translocation after the ATP-dependent function of SecA. The protein is Protein translocase subunit SecD of Syntrophobacter fumaroxidans (strain DSM 10017 / MPOB).